The following is a 1823-amino-acid chain: AF4/FMR2 family member lilli (1823 aa).

Low complexity predominate over residues 1–41 (MAQQQQQQHQQQQHHQQQQQQLQQQQQLLQYNNNSYNLNYN). Disordered stretches follow at residues 1–87 (MAQQ…DPEI), 126–305 (GFGS…ENHI), 422–544 (QQLT…KKKY), 570–626 (AGPG…WHLS), 686–712 (DSRH…YGVG), 753–1057 (PKNQ…DIPT), 1071–1287 (AAAQ…LKPR), 1322–1350 (ARQH…GART), 1413–1448 (FMLK…AEQL), 1480–1531 (ENSA…AIAS), 1547–1567 (TCSE…APRL), and 1715–1744 (GNTP…IVPQ). Positions 53 to 79 (REKYERQQGIQSDDRETSLFGEPRRLN) are enriched in basic and acidic residues. Low complexity-rich tracts occupy residues 126 to 147 (GFGS…SSAS), 156 to 174 (QQQQ…QQQQ), and 205 to 249 (PSSS…TSSP). Residues 426–438 (PTPPKASPTPPVI) are compositionally biased toward pro residues. Thr434 carries the phosphothreonine modification. Residues 441-454 (LKTEKNHSLEKQDS) show a composition bias toward basic and acidic residues. Over residues 456–466 (LENDLELSESD) the composition is skewed to acidic residues. Ser463 and Ser465 each carry phosphoserine. The span at 475–531 (SAGNSSNSSESDSSESGSEASSKGDPQQQQQQQQQHLLHQQQQHQQQQLLLQQQQQQ) shows a compositional bias: low complexity. The segment covering 582–598 (AAGGVGSGSGSTGGGSS) has biased composition (gly residues). The span at 599–612 (SSGMGTMSSSNSSN) shows a compositional bias: low complexity. A compositionally biased stretch (low complexity) spans 764–785 (SDSGSGSSGSGSSSSDSAGGSS). Over residues 818–827 (HKAQPNSVTL) the composition is skewed to polar residues. Over residues 839-849 (PRQKKPRKKKM) the composition is skewed to basic residues. Residues Ser859 and Ser860 each carry the phosphoserine modification. Low complexity-rich tracts occupy residues 877–906 (AATA…AAPA), 917–947 (QAQQ…SSQA), 962–979 (GTAS…VAAG), 1002–1057 (AAMA…DIPT), and 1102–1161 (NSSN…QLLQ). Residues 908–920 (KKGRGRPRKQAQQ) constitute a DNA-binding region (a.T hook). Phosphoserine is present on residues Ser939 and Ser941. Residues 1172-1181 (TLKQSAQQRL) are compositionally biased toward polar residues. Low complexity-rich tracts occupy residues 1182–1203 (SSSD…ASSS) and 1253–1280 (QQQQ…QQQQ). A compositionally biased stretch (polar residues) spans 1334–1344 (TQQNGHLSSRS). Residues 1480-1496 (ENSANASPNKLQQQNAR) are compositionally biased toward polar residues. Residue Ser1486 is modified to Phosphoserine. Low complexity predominate over residues 1497 to 1531 (QLPLSQSQLQHQHQHQHQLQQQQSQSTATGHAIAS). Positions 1555-1565 (TPPPAAPPPAP) are enriched in pro residues. A compositionally biased stretch (low complexity) spans 1715 to 1735 (GNTPSSISPSNSVGSQGSGSN).

Belongs to the AF4 family.

Its subcellular location is the nucleus. Has a role in transcriptional regulation. Acts in parallel with the Ras/MAPK and the PI3K/PKB pathways in the control of cell identity and cellular growth. Essential for regulation of the cytoskeleton and cell growth but not for cell proliferation or growth rate. Required specifically for the microtubule-based basal transport of lipid droplets. Plays a partially redundant function downstream of Raf in cell fate specification in the developing eye. Pair-rule protein that regulates embryonic cellularization, gastrulation and segmentation. In Drosophila virilis (Fruit fly), this protein is AF4/FMR2 family member lilli.